The primary structure comprises 265 residues: Enolase-phosphatase E1 (265 aa).

Mg(2+)-binding residues include Asp18 and Glu20. Substrate contacts are provided by residues 144 to 145 (SS) and Lys188. Asp215 contributes to the Mg(2+) binding site.

The protein belongs to the HAD-like hydrolase superfamily. MasA/MtnC family. In terms of assembly, monomer. The cofactor is Mg(2+).

The protein resides in the cytoplasm. It is found in the nucleus. The catalysed reaction is 5-methylsulfanyl-2,3-dioxopentyl phosphate + H2O = 1,2-dihydroxy-5-(methylsulfanyl)pent-1-en-3-one + phosphate. Its pathway is amino-acid biosynthesis; L-methionine biosynthesis via salvage pathway; L-methionine from S-methyl-5-thio-alpha-D-ribose 1-phosphate: step 3/6. The protein operates within amino-acid biosynthesis; L-methionine biosynthesis via salvage pathway; L-methionine from S-methyl-5-thio-alpha-D-ribose 1-phosphate: step 4/6. Functionally, bifunctional enzyme that catalyzes the enolization of 2,3-diketo-5-methylthiopentyl-1-phosphate (DK-MTP-1-P) into the intermediate 2-hydroxy-3-keto-5-methylthiopentenyl-1-phosphate (HK-MTPenyl-1-P), which is then dephosphorylated to form the acireductone 1,2-dihydroxy-3-keto-5-methylthiopentene (DHK-MTPene). The sequence is that of Enolase-phosphatase E1 from Candida albicans (strain SC5314 / ATCC MYA-2876) (Yeast).